The chain runs to 556 residues: Acetyl-coenzyme A thioesterase (556 aa).

The region spanning 6–118 (APGEVLMSQA…FSTFVVKPLG (113 aa)) is the HotDog ACOT-type 1 domain. Lysine 34 bears the N6-succinyllysine mark. Residues 54–56 (TAS) and 83–85 (STS) contribute to the CoA site. N6-succinyllysine is present on lysine 97. CoA is bound at residue arginine 145. An N6-succinyllysine mark is found at lysine 160 and lysine 229. A HotDog ACOT-type 2 domain is found at 180-295 (MATSVQSIEL…FLIYNAVDDQ (116 aa)). 235 to 237 (KFR) serves as a coordination point for CoA. The region spanning 341 to 550 (GTQWDISKKG…IKFIENATHD (210 aa)) is the START domain.

As to quaternary structure, homodimer or homotetramer.

It is found in the cytoplasm. The protein resides in the cytosol. The enzyme catalyses acetyl-CoA + H2O = acetate + CoA + H(+). The catalysed reaction is butanoyl-CoA + H2O = butanoate + CoA + H(+). It carries out the reaction hexanoyl-CoA + H2O = hexanoate + CoA + H(+). Its pathway is lipid metabolism; fatty acid metabolism. Allosterically regulated by ATP (activator) and ADP (inhibitor). Cold labile, it dissociates into inactive monomers at low temperature. In terms of biological role, catalyzes the hydrolysis of acyl-CoAs into free fatty acids and coenzyme A (CoASH), regulating their respective intracellular levels. Preferentially hydrolyzes acetyl-CoA. The protein is Acetyl-coenzyme A thioesterase (Acot12) of Rattus norvegicus (Rat).